A 147-amino-acid chain; its full sequence is Ubiquitin-conjugating enzyme E2 4 (147 aa).

In terms of domain architecture, UBC core spans 1 to 147 (MSLKRINKEL…AKEWTKKYAV (147 aa)). Catalysis depends on Cys-85, which acts as the Glycyl thioester intermediate.

It belongs to the ubiquitin-conjugating enzyme family.

It catalyses the reaction S-ubiquitinyl-[E1 ubiquitin-activating enzyme]-L-cysteine + [E2 ubiquitin-conjugating enzyme]-L-cysteine = [E1 ubiquitin-activating enzyme]-L-cysteine + S-ubiquitinyl-[E2 ubiquitin-conjugating enzyme]-L-cysteine.. It functions in the pathway protein modification; protein ubiquitination. Its function is as follows. E2 ubiquitin-conjugating enzyme that catalyzes the covalent attachment of ubiquitin to other proteins. Mediates the selective degradation of short-lived and abnormal proteins. Mediates ubiquitination of PEX5. The chain is Ubiquitin-conjugating enzyme E2 4 (UBC4) from Candida albicans (Yeast).